Here is a 377-residue protein sequence, read N- to C-terminus: MKNKYYPLRSSMDEMSAKNDNEIDLEKGPLPEYNSEDGSTLPPYSDLNNPKQMGQNITKLFNWNKSTTPPDYDENRLPITDEGNNPPNTHRENHSSGTTDNSSPFLIKLLISFTSIILFNAPAVCYLKYKDAFFKNYGAAEWTLFGFWCLVCTLALLFLTYFYETWSKAVKVTIIFLAQCIKVTAVFLAQCVKVTAISLAKCVKVTAVGLYNSREKWVVIIWLLWVVICYTLFLRSKFGNLNLNKALICSTCSISAALLLFLLYVRLPFWTLKHMFSGLFQVLGVQSCVVIVTKGLMHLFDKHIDATGYEIEVSSLFVIGNFLFFYEMECPGALRRMPKSIRNGIASFLEGTGRAIRGANDNNNSIPLEETEAESEV.

Disordered regions lie at residues 1–49 (MKNK…DLNN) and 64–100 (NKST…GTTD). Positions 11-29 (SMDEMSAKNDNEIDLEKGP) are enriched in basic and acidic residues. 7 helical membrane-spanning segments follow: residues 105–125 (FLIK…PAVC), 142–162 (WTLF…LTYF), 172–192 (VTII…AQCV), 218–238 (VVII…RSKF), 252–272 (CSIS…FWTL), 276–296 (FSGL…TKGL), and 306–326 (ATGY…LFFY).

This sequence belongs to the WTF family. As to quaternary structure, homomer. Forms protein aggregates. The two isoforms can interact with each other and with themselves. High sequence similarity is required for their interaction.

The protein localises to the spore membrane. Its subcellular location is the vacuole membrane. It localises to the ascus epiplasm. It is found in the cytoplasm. The protein resides in the endoplasmic reticulum membrane. Promotes unequal transmission of alleles from the parental zygote to progeny spores by acting as poison/antidote system where the poison and antidote proteins are produced from the same locus; the poison component is trans-acting and targets all spores within an ascus whereas the antidote component is spore-specific, leading to poisoning of all progeny that do not inherit the allele. Its function is as follows. Localizes isoform 2 to the vacuole thereby facilitating its degradation. In terms of biological role, forms toxic aggregates that disrupt spore maturation. The polypeptide is Meiotic driver cw9 (Schizosaccharomyces pombe (Fission yeast)).